Reading from the N-terminus, the 395-residue chain is Calreticulin (395 aa).

Residues 1–15 (MKSLCLLAIVAVVSA) form the signal peptide. Cys101 and Cys133 are oxidised to a cystine. The an alpha-D-glucoside site is built by Tyr105, Lys107, Tyr124, and Asp131. 7 repeat units span residues 186 to 197 (AQTGSLEEDWDL), 205 to 216 (DPDAKKPEDWDE), 222 to 233 (DAEDAKPEDWEK), 239 to 250 (DPDAKKPEDWDD), 254 to 264 (GEWEPPMIDNP), 268 to 278 (GEWKPKQIKNP), and 282 to 292 (GKWIHPEIENP). Residues 186–250 (AQTGSLEEDW…DAKKPEDWDD (65 aa)) are 4 X approximate repeats. Positions 193–301 (EDWDLLPAKK…PEYTPDDELY (109 aa)) are P-domain. Residues 202–212 (KIKDPDAKKPE) are compositionally biased toward basic and acidic residues. The tract at residues 202–255 (KIKDPDAKKPEDWDEREYIDDAEDAKPEDWEKPEHIPDPDAKKPEDWDDEMDGE) is disordered. Residues 213–224 (DWDEREYIDDAE) are compositionally biased toward acidic residues. A compositionally biased stretch (basic and acidic residues) spans 225–246 (DAKPEDWEKPEHIPDPDAKKPE). The 3 X approximate repeats stretch occupies residues 254–292 (GEWEPPMIDNPEYKGEWKPKQIKNPAYKGKWIHPEIENP). The tract at residues 302–395 (SYESWGAIGF…KEEEEGHDEL (94 aa)) is C-domain. Asp312 is a binding site for an alpha-D-glucoside. The segment covering 340–380 (ETFDKLKTVEKEKKEKADEETRKAEEEARKKAEEEKEAKKD) has biased composition (basic and acidic residues). A disordered region spans residues 340–395 (ETFDKLKTVEKEKKEKADEETRKAEEEARKKAEEEKEAKKDDDEEEKEEEEGHDEL). The span at 381 to 395 (DDEEEKEEEEGHDEL) shows a compositional bias: acidic residues. Positions 392–395 (HDEL) match the Prevents secretion from ER motif.

Belongs to the calreticulin family. In terms of processing, cleaved by caspase ced-3 in vitro.

It localises to the endoplasmic reticulum lumen. Molecular calcium-binding chaperone promoting folding, oligomeric assembly and quality control in the endoplasmic reticulum (ER) via the calreticulin/calnexin cycle. This lectin may interact transiently with almost all of the monoglucosylated glycoproteins that are synthesized in the ER. Probably by controlling the folding of extracellular matrix protein unc-52/Perlecan, may play a role in the formation of fibrous organelles, a hemidesmosome-like structure attaching muscles to the epidermis. Protects dopaminergic neurons against oxidative stress-induced neurodegeneration. May play a role in protection against ER stress. Plays a role in modulating lifespan, acting by influencing ER calcium homeostasis. This Caenorhabditis elegans protein is Calreticulin (crt-1).